The chain runs to 171 residues: Der GTPase-activating protein YihI (171 aa).

2 disordered regions span residues 1-99 (MKKP…QAEL) and 145-171 (LSYDDDDEDDEEDEKQEDMMRLLRGGN). The span at 20–30 (TREELNQEARD) shows a compositional bias: basic and acidic residues. The segment covering 31 to 40 (RKRLKKHRGH) has biased composition (basic residues). Acidic residues predominate over residues 147–160 (YDDDDEDDEEDEKQ).

The protein belongs to the YihI family. In terms of assembly, interacts with Der.

A GTPase-activating protein (GAP) that modifies Der/EngA GTPase function. May play a role in ribosome biogenesis. The chain is Der GTPase-activating protein YihI from Salmonella choleraesuis (strain SC-B67).